We begin with the raw amino-acid sequence, 289 residues long: Bis(5'-nucleosyl)-tetraphosphatase, symmetrical (289 aa).

Belongs to the Ap4A hydrolase family.

The enzyme catalyses P(1),P(4)-bis(5'-adenosyl) tetraphosphate + H2O = 2 ADP + 2 H(+). Hydrolyzes diadenosine 5',5'''-P1,P4-tetraphosphate to yield ADP. The sequence is that of Bis(5'-nucleosyl)-tetraphosphatase, symmetrical from Yersinia pseudotuberculosis serotype O:1b (strain IP 31758).